Reading from the N-terminus, the 25-residue chain is Cytochrome c oxidase polypeptide VIIc (25 aa).

A disordered region spans residues 1–25 (SHYSEGPGQNLPFSVQNKXRLLGMM).

The protein belongs to the cytochrome c oxidase VIIc family. Component of the cytochrome c oxidase (complex IV, CIV), a multisubunit enzyme composed of 14 subunits. The complex is composed of a catalytic core of 3 subunits MT-CO1, MT-CO2 and MT-CO3, encoded in the mitochondrial DNA, and 11 supernumerary subunits COX4I, COX5A, COX5B, COX6A, COX6B, COX6C, COX7A, COX7B, COX7C, COX8 and NDUFA4, which are encoded in the nuclear genome. The complex exists as a monomer or a dimer and forms supercomplexes (SCs) in the inner mitochondrial membrane with NADH-ubiquinone oxidoreductase (complex I, CI) and ubiquinol-cytochrome c oxidoreductase (cytochrome b-c1 complex, complex III, CIII), resulting in different assemblies (supercomplex SCI(1)III(2)IV(1) and megacomplex MCI(2)III(2)IV(2)). Interacts with RAB5IF.

The protein resides in the mitochondrion inner membrane. It participates in energy metabolism; oxidative phosphorylation. In terms of biological role, component of the cytochrome c oxidase, the last enzyme in the mitochondrial electron transport chain which drives oxidative phosphorylation. The respiratory chain contains 3 multisubunit complexes succinate dehydrogenase (complex II, CII), ubiquinol-cytochrome c oxidoreductase (cytochrome b-c1 complex, complex III, CIII) and cytochrome c oxidase (complex IV, CIV), that cooperate to transfer electrons derived from NADH and succinate to molecular oxygen, creating an electrochemical gradient over the inner membrane that drives transmembrane transport and the ATP synthase. Cytochrome c oxidase is the component of the respiratory chain that catalyzes the reduction of oxygen to water. Electrons originating from reduced cytochrome c in the intermembrane space (IMS) are transferred via the dinuclear copper A center (CU(A)) of subunit 2 and heme A of subunit 1 to the active site in subunit 1, a binuclear center (BNC) formed by heme A3 and copper B (CU(B)). The BNC reduces molecular oxygen to 2 water molecules using 4 electrons from cytochrome c in the IMS and 4 protons from the mitochondrial matrix. In Oncorhynchus mykiss (Rainbow trout), this protein is Cytochrome c oxidase polypeptide VIIc.